The following is a 204-amino-acid chain: FMN-dependent NADH:quinone oxidoreductase (204 aa).

Residues S9 and S15 to S17 each bind FMN.

This sequence belongs to the azoreductase type 1 family. In terms of assembly, homodimer. Requires FMN as cofactor.

The enzyme catalyses 2 a quinone + NADH + H(+) = 2 a 1,4-benzosemiquinone + NAD(+). It carries out the reaction N,N-dimethyl-1,4-phenylenediamine + anthranilate + 2 NAD(+) = 2-(4-dimethylaminophenyl)diazenylbenzoate + 2 NADH + 2 H(+). Its function is as follows. Quinone reductase that provides resistance to thiol-specific stress caused by electrophilic quinones. In terms of biological role, also exhibits azoreductase activity. Catalyzes the reductive cleavage of the azo bond in aromatic azo compounds to the corresponding amines. The polypeptide is FMN-dependent NADH:quinone oxidoreductase (Xanthomonas campestris pv. campestris (strain ATCC 33913 / DSM 3586 / NCPPB 528 / LMG 568 / P 25)).